The primary structure comprises 210 residues: Guanylate kinase (210 aa).

The Guanylate kinase-like domain maps to Gly-8 to Leu-188. Ala-15–Ser-22 serves as a coordination point for ATP.

Belongs to the guanylate kinase family.

It localises to the cytoplasm. It carries out the reaction GMP + ATP = GDP + ADP. Its function is as follows. Essential for recycling GMP and indirectly, cGMP. This Idiomarina loihiensis (strain ATCC BAA-735 / DSM 15497 / L2-TR) protein is Guanylate kinase.